Here is a 259-residue protein sequence, read N- to C-terminus: GTP cyclohydrolase FolE2 (259 aa).

This sequence belongs to the GTP cyclohydrolase IV family.

The enzyme catalyses GTP + H2O = 7,8-dihydroneopterin 3'-triphosphate + formate + H(+). The protein operates within cofactor biosynthesis; 7,8-dihydroneopterin triphosphate biosynthesis; 7,8-dihydroneopterin triphosphate from GTP: step 1/1. Functionally, converts GTP to 7,8-dihydroneopterin triphosphate. The protein is GTP cyclohydrolase FolE2 of Thermosipho melanesiensis (strain DSM 12029 / CIP 104789 / BI429).